The following is a 458-amino-acid chain: MRRISVKKLCSFCLCACAFAFLVMTFQVIELLGQFEQTEHRQQIKRFEDIKVQANAHVSDVQYPVIVWWSPLTGELGRLGECGHNRCFFTVNKSYYSHPQTKAFLFYGTDFSIESLPLPRHKQHQWALFHEESPKNNYKLFHKPLITQFNHTATFSRHSHLPLTTQHLEDINTLTAQTHLLPLSYKNHLRQTLAPVVYVQSDCDPPSDRDTYIRELMQHIQVDSYGQCLHNKDLPPHLRDSTAMDDQDFYKILAQYKFILAFENAVCDDYITEKLWRPLKLGVVPVYYGAPNIHMWLPDNQSAIVVNPNEPPKKLAQYLKRLDKNDWEYLKYLEWKHKREITNINLLKELKERPWGVQDITQDNFIDVFECMVCSRVWENIHRQEEKLPPKVWRAEESHLTCPPPKLFDFALSSSSSLRQMWGASYEQSKREARALAQMLHTNTNFTITQFWREVFTD.

Residues 1 to 11 (MRRISVKKLCS) lie on the Cytoplasmic side of the membrane. The helical; Signal-anchor for type II membrane protein transmembrane segment at 12–32 (FCLCACAFAFLVMTFQVIELL) threads the bilayer. The Lumenal segment spans residues 33–458 (GQFEQTEHRQ…TQFWREVFTD (426 aa)). Residues N92, N150, and N300 are each glycosylated (N-linked (GlcNAc...) asparagine). An intrachain disulfide couples C371 to C374. N445 carries N-linked (GlcNAc...) asparagine glycosylation.

Belongs to the glycosyltransferase 10 family.

The protein resides in the endoplasmic reticulum membrane. The enzyme catalyses L-threonyl-[protein] + GDP-beta-L-fucose = 3-O-(alpha-L-fucosyl)-L-threonyl-[protein] + GDP + H(+). It catalyses the reaction L-seryl-[protein] + GDP-beta-L-fucose = 3-O-(alpha-L-fucosyl)-L-seryl-[protein] + GDP + H(+). Its pathway is protein modification; protein glycosylation. Functionally, protein O-fucosyltransferase that specifically catalyzes O-fucosylation of serine or threonine residues in EMI domains of target proteins. Attaches fucose through an O-glycosidic linkage. O-fucosylation of EMI domain-containing proteins may be required for facilitating protein folding and secretion. The chain is GDP-fucose protein O-fucosyltransferase 3 (fut10) from Danio rerio (Zebrafish).